Reading from the N-terminus, the 192-residue chain is Ubiquitin-conjugating enzyme E2 T (192 aa).

The region spanning Gln2–Leu152 is the UBC core domain. The Glycyl thioester intermediate role is filled by Cys86. A disordered region spans residues His150–Pro192. Basic and acidic residues predominate over residues Ser178–Pro192.

It belongs to the ubiquitin-conjugating enzyme family.

Its subcellular location is the nucleus. It carries out the reaction S-ubiquitinyl-[E1 ubiquitin-activating enzyme]-L-cysteine + [E2 ubiquitin-conjugating enzyme]-L-cysteine = [E1 ubiquitin-activating enzyme]-L-cysteine + S-ubiquitinyl-[E2 ubiquitin-conjugating enzyme]-L-cysteine.. Its pathway is protein modification; protein ubiquitination. Its function is as follows. Accepts ubiquitin from the E1 complex and catalyzes its covalent attachment to other proteins. Catalyzes monoubiquitination. Involved in DNA repair. The protein is Ubiquitin-conjugating enzyme E2 T (ube2t) of Xenopus laevis (African clawed frog).